A 383-amino-acid chain; its full sequence is Anhydro-N-acetylmuramic acid kinase (383 aa).

An ATP-binding site is contributed by 9–16 (GTSVDSID).

This sequence belongs to the anhydro-N-acetylmuramic acid kinase family.

The enzyme catalyses 1,6-anhydro-N-acetyl-beta-muramate + ATP + H2O = N-acetyl-D-muramate 6-phosphate + ADP + H(+). It functions in the pathway amino-sugar metabolism; 1,6-anhydro-N-acetylmuramate degradation. Its pathway is cell wall biogenesis; peptidoglycan recycling. Functionally, catalyzes the specific phosphorylation of 1,6-anhydro-N-acetylmuramic acid (anhMurNAc) with the simultaneous cleavage of the 1,6-anhydro ring, generating MurNAc-6-P. Is required for the utilization of anhMurNAc either imported from the medium or derived from its own cell wall murein, and thus plays a role in cell wall recycling. The protein is Anhydro-N-acetylmuramic acid kinase of Crocosphaera subtropica (strain ATCC 51142 / BH68) (Cyanothece sp. (strain ATCC 51142)).